The chain runs to 426 residues: C4-dicarboxylate transport protein (426 aa).

8 helical membrane-spanning segments follow: residues 8 to 28, 44 to 64, 78 to 98, 148 to 168, 184 to 204, 222 to 242, 297 to 317, and 355 to 375; these read VLYV…HFYP, LIKM…IAGM, LLYF…ATHL, GEIL…AHVG, ILFG…FGAM, LIGT…GFIA, GYSF…LFIA, and AATL…ILGI.

It belongs to the dicarboxylate/amino acid:cation symporter (DAACS) (TC 2.A.23) family.

Its subcellular location is the cell inner membrane. Functionally, responsible for the transport of dicarboxylates such as succinate, fumarate, and malate from the periplasm across the membrane. This is C4-dicarboxylate transport protein from Paraburkholderia phymatum (strain DSM 17167 / CIP 108236 / LMG 21445 / STM815) (Burkholderia phymatum).